Here is a 256-residue protein sequence, read N- to C-terminus: 5-keto-4-deoxy-D-glucarate aldolase (256 aa).

The active-site Proton acceptor is the His-50. Residue Gln-151 coordinates substrate. A Mg(2+)-binding site is contributed by Glu-153. Ser-178 and Asp-179 together coordinate substrate. Asp-179 serves as a coordination point for Mg(2+).

It belongs to the HpcH/HpaI aldolase family. KDGluc aldolase subfamily. In terms of assembly, homohexamer; trimer of dimers. It depends on Mg(2+) as a cofactor.

The enzyme catalyses 5-dehydro-4-deoxy-D-glucarate = 2-hydroxy-3-oxopropanoate + pyruvate. It carries out the reaction 2-dehydro-3-deoxy-D-glucarate = 2-hydroxy-3-oxopropanoate + pyruvate. It functions in the pathway carbohydrate acid metabolism; galactarate degradation; D-glycerate from galactarate: step 2/3. Its function is as follows. Catalyzes the reversible retro-aldol cleavage of both 5-keto-4-deoxy-D-glucarate and 2-keto-3-deoxy-D-glucarate to pyruvate and tartronic semialdehyde. The protein is 5-keto-4-deoxy-D-glucarate aldolase of Salmonella paratyphi A (strain ATCC 9150 / SARB42).